We begin with the raw amino-acid sequence, 55 residues long: uncharacterized protein (55 aa).

A helical membrane pass occupies residues 27 to 44; it reads SFWFILISASSFLIYSLF.

It localises to the membrane. This is an uncharacterized protein from Dictyostelium discoideum (Social amoeba).